Here is a 146-residue protein sequence, read N- to C-terminus: Large ribosomal subunit protein uL15 (146 aa).

The tract at residues 1 to 56 (MKLHELKAAEGANKASKRVGRGTGSGLGKTSGKGQNGQNSRSGGGVRPGFEGGQMP) is disordered. Composition is skewed to gly residues over residues 21-35 (RGTGSGLGKTSGKGQ) and 42-52 (SGGGVRPGFEG).

This sequence belongs to the universal ribosomal protein uL15 family. In terms of assembly, part of the 50S ribosomal subunit.

Its function is as follows. Binds to the 23S rRNA. In Clostridium botulinum (strain Langeland / NCTC 10281 / Type F), this protein is Large ribosomal subunit protein uL15.